Reading from the N-terminus, the 351-residue chain is Outer membrane protein A (351 aa).

Positions 1-21 (MKKTAIAIAVALAGFATVAQA) are cleaved as a signal peptide. 8 beta stranded membrane passes run 27-37 (TWYTGAKLGWS), 55-66 (QLGAGAFGGYQV), 70-78 (VGFEMGYDW), 96-107 (QGVQLTAKLGYP), 112-120 (LDIYTRLGG), 147-156 (PVFAGGVEWA), 161-168 (IATRLEYQ), and 187-195 (LLSLGVSYR). 4 consecutive repeat copies span residues 206-207 (AP), 208-209 (AP), 210-211 (AP), and 212-213 (AP). Positions 206-213 (APAPAPAP) are 4 X 2 AA tandem repeats of A-P. Positions 215 to 343 (VQTKHFTLKS…RVEIEVKGIK (129 aa)) constitute an OmpA-like domain. A disulfide bridge connects residues Cys-316 and Cys-328.

The protein belongs to the outer membrane OOP (TC 1.B.6) superfamily. OmpA family. Monomer and homodimer.

The protein localises to the cell outer membrane. With TolR probably plays a role in maintaining the position of the peptidoglycan cell wall in the periplasm. Acts as a porin with low permeability that allows slow penetration of small solutes; an internal gate slows down solute passage. In terms of biological role, required for conjugation with F-type plasmids; probably serves as the mating receptor on recipient cells. This chain is Outer membrane protein A, found in Escherichia fergusonii (strain ATCC 35469 / DSM 13698 / CCUG 18766 / IAM 14443 / JCM 21226 / LMG 7866 / NBRC 102419 / NCTC 12128 / CDC 0568-73).